Here is a 503-residue protein sequence, read N- to C-terminus: GMP synthase [glutamine-hydrolyzing] (503 aa).

In terms of domain architecture, Glutamine amidotransferase type-1 spans 1-189 (MVLVLDFGSQ…FLELAGAKRD (189 aa)). Catalysis depends on Cys78, which acts as the Nucleophile. Residues His164 and Glu166 contribute to the active site. Positions 190 to 378 (WTPEHVLEEL…LGLPDTLRLR (189 aa)) constitute a GMPS ATP-PPase domain. 217 to 223 (SGGVDSS) is an ATP binding site.

Homodimer.

The catalysed reaction is XMP + L-glutamine + ATP + H2O = GMP + L-glutamate + AMP + diphosphate + 2 H(+). The protein operates within purine metabolism; GMP biosynthesis; GMP from XMP (L-Gln route): step 1/1. Functionally, catalyzes the synthesis of GMP from XMP. In Thermus thermophilus (strain ATCC BAA-163 / DSM 7039 / HB27), this protein is GMP synthase [glutamine-hydrolyzing].